Here is a 1042-residue protein sequence, read N- to C-terminus: Isoleucine--tRNA ligase (1042 aa).

Positions 48-58 (PFATGLPHFGH) match the 'HIGH' region motif. A 'KMSKS' region motif is present at residues 594–598 (KMSKS). Lys-597 contributes to the ATP binding site.

This sequence belongs to the class-I aminoacyl-tRNA synthetase family. IleS type 2 subfamily. As to quaternary structure, monomer. Zn(2+) serves as cofactor.

The protein localises to the cytoplasm. It catalyses the reaction tRNA(Ile) + L-isoleucine + ATP = L-isoleucyl-tRNA(Ile) + AMP + diphosphate. Its function is as follows. Catalyzes the attachment of isoleucine to tRNA(Ile). As IleRS can inadvertently accommodate and process structurally similar amino acids such as valine, to avoid such errors it has two additional distinct tRNA(Ile)-dependent editing activities. One activity is designated as 'pretransfer' editing and involves the hydrolysis of activated Val-AMP. The other activity is designated 'posttransfer' editing and involves deacylation of mischarged Val-tRNA(Ile). The protein is Isoleucine--tRNA ligase of Borrelia garinii subsp. bavariensis (strain ATCC BAA-2496 / DSM 23469 / PBi) (Borreliella bavariensis).